A 122-amino-acid polypeptide reads, in one-letter code: Large ribosomal subunit protein uL18 (122 aa).

This sequence belongs to the universal ribosomal protein uL18 family. In terms of assembly, part of the 50S ribosomal subunit; part of the 5S rRNA/L5/L18/L25 subcomplex. Contacts the 5S and 23S rRNAs.

Functionally, this is one of the proteins that bind and probably mediate the attachment of the 5S RNA into the large ribosomal subunit, where it forms part of the central protuberance. This is Large ribosomal subunit protein uL18 from Mycobacterium avium (strain 104).